Consider the following 307-residue polypeptide: Protoheme IX farnesyltransferase (307 aa).

Transmembrane regions (helical) follow at residues 28 to 48 (LVIFTGICGLLAAPGAINPIL), 50 to 70 (FTAILCIAMGAGGSAALNQWW), 99 to 117 (FGILISVASVGIMGIAINW), 121 to 138 (IILAAAIVYYAVIYTIWL), 146 to 166 (IVIGGGAGAFPPMIGWVAVTG), 173 to 193 (VLLFAIIFMWTPPHFWALALF), 219 to 239 (ILVYSILLIPFAVAPWAIGAT), 241 to 261 (AIYGVSALLLTGAFAALSVPV), and 278 to 298 (LFGFSILYLFALFAALVADRY).

The protein belongs to the UbiA prenyltransferase family. Protoheme IX farnesyltransferase subfamily.

The protein localises to the cell inner membrane. It carries out the reaction heme b + (2E,6E)-farnesyl diphosphate + H2O = Fe(II)-heme o + diphosphate. It participates in porphyrin-containing compound metabolism; heme O biosynthesis; heme O from protoheme: step 1/1. Functionally, converts heme B (protoheme IX) to heme O by substitution of the vinyl group on carbon 2 of heme B porphyrin ring with a hydroxyethyl farnesyl side group. This Erythrobacter litoralis (strain HTCC2594) protein is Protoheme IX farnesyltransferase.